A 696-amino-acid polypeptide reads, in one-letter code: Caprolactamase subunit alpha (696 aa).

Belongs to the HyuA family. The caprolactamase is a heterotetramer composed of two alpha subunits (CapA) and two beta subunits (CapB).

With respect to regulation, activity is dependent on the presence of ATP and bicarbonate. The requirement for bicarbonate may be related to allosteric activation through conformational effects, but it is also conceivable that carboxyphosphate is formed and acts as a mediator in caprolactam activation, forming carboxy- or phospholactim. In terms of biological role, component of a caprolactamase involved in the degradation of caprolactam, an industrial compound mainly used in the production of Nylon 6. Catalyzes the ATP-dependent hydrolysis of the caprolactam ring to form 6-aminocaproic acid (6-ACA). The alpha subunit is responsible for ATP-dependent substrate phosphorylation. The enzyme cannot use 5-oxoproline. The sequence is that of Caprolactamase subunit alpha from Pseudomonas jessenii.